Here is a 631-residue protein sequence, read N- to C-terminus: RING finger protein 112 (631 aa).

An RING-type zinc finger spans residues 57-98 (CSICLERLRDPISLDCGHDFCIRCFSTHRLPGCEPPCCPECR). The segment at 131-631 (PVRAEPLLLV…GDREPLLQEE (501 aa)) is interaction with ZBTB16. In terms of domain architecture, GB1/RHD3-type G spans 166 to 397 (DTPVCLLAVL…YVSDVLSAAP (232 aa)). 318-319 (RD) provides a ligand contact to GTP. The next 2 helical transmembrane spans lie at 547-567 (LAAV…GVVG) and 580-600 (GMVA…GGGV).

The protein belongs to the TRAFAC class dynamin-like GTPase superfamily. GB1/RHD3 GTPase family. GB1 subfamily. In terms of assembly, self-associates. Interacts with SP1 in an oxidative stress-regulated manner. Interacts with SIGMAR1 in an oxidative stress-regulated manner. Interacts with ZBTB16 (via C2H2-type zinc finger domains 1 and 2). In terms of processing, auto-ubiquitinated. As to expression, predominantly expressed in brain. Decreased expression in glioma brain tumors as compared to normal brains (at protein level).

The protein resides in the membrane. It is found in the cytoplasm. The protein localises to the nucleus. Its subcellular location is the nuclear body. It localises to the nucleoplasm. The protein resides in the endosome. It is found in the cytoplasmic vesicle. The protein localises to the secretory vesicle. Its subcellular location is the synaptic vesicle. It localises to the postsynaptic density. The protein resides in the perikaryon. It is found in the cell projection. The protein localises to the neuron projection. The enzyme catalyses S-ubiquitinyl-[E2 ubiquitin-conjugating enzyme]-L-cysteine + [acceptor protein]-L-lysine = [E2 ubiquitin-conjugating enzyme]-L-cysteine + N(6)-ubiquitinyl-[acceptor protein]-L-lysine.. It functions in the pathway protein modification; protein ubiquitination. Functionally, E3 ubiquitin-protein ligase that plays an important role in neuronal differentiation, including neurogenesis and gliogenesis, during brain development. During embryonic development initiates neuronal differentiation by inducing cell cycle arrest at the G0/G1 phase through up-regulation of cell-cycle regulatory proteins. Plays a role not only in the fetal period during the development of the nervous system, but also in the adult brain, where it is involved in the maintenance of neural functions and protection of the nervous tissue cells from oxidative stress-induced damage. Exhibits GTPase and E3 ubiquitin-protein ligase activities. Regulates dendritic spine density and synaptic neurotransmission; its ability to hydrolyze GTP is involved in the maintenance of dendritic spine density. In Homo sapiens (Human), this protein is RING finger protein 112 (RNF112).